The chain runs to 458 residues: Sphingomyelinase DDB_G0288017 (458 aa).

The disordered stretch occupies residues Asn-91 to Asn-111. A Mg(2+)-binding site is contributed by Glu-135. Residue His-447 is the Proton acceptor of the active site.

The protein belongs to the neutral sphingomyelinase family. Mg(2+) serves as cofactor.

It carries out the reaction a sphingomyelin + H2O = phosphocholine + an N-acylsphing-4-enine + H(+). Its pathway is lipid metabolism; sphingolipid metabolism. In terms of biological role, catalyzes the hydrolysis of sphingomyelin to form ceramide and phosphocholine. In Dictyostelium discoideum (Social amoeba), this protein is Sphingomyelinase DDB_G0288017.